A 513-amino-acid polypeptide reads, in one-letter code: Solute carrier family 2, facilitated glucose transporter member 7 (513 aa).

Over 1–21 (MEDKEIGTPLPLPHSEARLQP) the chain is Cytoplasmic. Residues 22-42 (TLVLTTLSAAFGSVFQYGYNI) traverse the membrane as a helical segment. The Extracellular segment spans residues 43–78 (AVINTPHKVFKSFYNDTHFERHGTFMDESTLLLLWS). Asn57 is a glycosylation site (N-linked (GlcNAc...) asparagine). Residues 79 to 99 (CTVSMFPLGGLLGSLVVGLMV) traverse the membrane as a helical segment. At 100 to 107 (NKWGRKGT) the chain is on the cytoplasmic side. Residues 108 to 128 (LLINNVFAITSAVLMGVSKVA) traverse the membrane as a helical segment. Residues 129–138 (RAFELIILSR) are Extracellular-facing. Residues 139-159 (VLVGICAGIAYSTLPMYLGEL) form a helical membrane-spanning segment. Residues 160-172 (APQNLRGALGTMT) lie on the Cytoplasmic side of the membrane. Residues 173–193 (EVFVIIGVLLAQIFSLQAILG) form a helical membrane-spanning segment. Topologically, residues 194–198 (NATGW) are extracellular. Residues 199-219 (PILLALTGVPAVIQLLSLPFF) form a helical membrane-spanning segment. Topologically, residues 220–282 (PESPRYTLIE…LNLFTFRPLR (63 aa)) are cytoplasmic. The chain crosses the membrane as a helical span at residues 283–303 (WQLISIVVLMAGQQLSGINAV). D-glucose-binding positions include 295–296 (QQ) and Asn301. The Extracellular segment spans residues 304 to 322 (NYYADVIYTSAGVDPTQSQ). Residues 323 to 343 (YVTLGSGVINLVMTLVSAVII) traverse the membrane as a helical segment. Asn332 provides a ligand contact to D-glucose. Over 344 to 351 (ERLGRRIL) the chain is Cytoplasmic. The helical transmembrane segment at 352-372 (LLSGYAICCSACLVLTVALLL) threads the bilayer. The Extracellular portion of the chain corresponds to 373-380 (QSTAPELS). Residues 381-401 (YLSIVCVFSYIVGHSIGPSPV) form a helical membrane-spanning segment. Topologically, residues 402–416 (PSVVRTEIVLQSSRT) are cytoplasmic. The chain crosses the membrane as a helical span at residues 417–437 (AAFTVDGAVHWLTNFIVGLTF). Topologically, residues 438 to 446 (PSIQVAIGA) are extracellular. A helical membrane pass occupies residues 447–467 (YSFLVFAGVCILTAAYIYVVI). At 468 to 513 (PETKGRTFVEINCAFAKRNGVEFPEEKEVATAKPHTPSLPTKETAF) the chain is on the cytoplasmic side. A disordered region spans residues 494-513 (KEVATAKPHTPSLPTKETAF).

This sequence belongs to the major facilitator superfamily. Sugar transporter (TC 2.A.1.1) family. Glucose transporter subfamily.

It localises to the cell membrane. The protein resides in the apical cell membrane. The enzyme catalyses D-glucose(out) = D-glucose(in). The catalysed reaction is D-fructose(out) = D-fructose(in). Probable sugar transporter. Even if its physiological substrate is subject to discussion, it is able to transport glucose and fructose. Does not transport galactose, 2-deoxy-d-glucose and xylose. In Mus musculus (Mouse), this protein is Solute carrier family 2, facilitated glucose transporter member 7.